Here is a 305-residue protein sequence, read N- to C-terminus: Peroxisome assembly protein 26 (305 aa).

At 1–246 (MKSDASTSAA…RRLWGSVVSH (246 aa)) the chain is on the cytoplasmic side. Residues 247–267 (LLSQPFRKGLLAALILCLLIL) traverse the membrane as a helical; Signal-anchor for type II membrane protein segment. Topologically, residues 268-305 (RFDPAAPSSLPFLYQLTQLFRRIQKATLSRLYPLALRD) are peroxisomal matrix.

It belongs to the peroxin-26 family. In terms of assembly, interacts (via its cytoplasmic domain) with PEX6; interaction is direct and is ATP-dependent. Interacts with PEX1; interaction is indirect and is mediated via interaction with PEX6.

Its subcellular location is the peroxisome membrane. In terms of biological role, peroxisomal docking factor that anchors PEX1 and PEX6 to peroxisome membranes. PEX26 is therefore required for the formation of the PEX1-PEX6 AAA ATPase complex, a complex that mediates the extraction of the PEX5 receptor from peroxisomal membrane. The sequence is that of Peroxisome assembly protein 26 from Mus musculus (Mouse).